We begin with the raw amino-acid sequence, 247 residues long: Fibroblast growth factor 14 (247 aa).

Disordered stretches follow at residues 1–38 (MAAA…KNRG) and 214–247 (VGET…SKTT). Over residues 15 to 25 (QAREQHWDRPS) the composition is skewed to basic and acidic residues.

The protein belongs to the heparin-binding growth factors family. In terms of assembly, interacts with SCN8A. In terms of tissue distribution, nervous system.

It is found in the nucleus. Its function is as follows. Probably involved in nervous system development and function. The sequence is that of Fibroblast growth factor 14 (FGF14) from Homo sapiens (Human).